The following is a 174-amino-acid chain: Crossover junction endodeoxyribonuclease RuvC (174 aa).

Catalysis depends on residues Asp-16, Glu-76, and Asp-148. Mg(2+) contacts are provided by Asp-16, Glu-76, and Asp-148.

The protein belongs to the RuvC family. As to quaternary structure, homodimer which binds Holliday junction (HJ) DNA. The HJ becomes 2-fold symmetrical on binding to RuvC with unstacked arms; it has a different conformation from HJ DNA in complex with RuvA. In the full resolvosome a probable DNA-RuvA(4)-RuvB(12)-RuvC(2) complex forms which resolves the HJ. Requires Mg(2+) as cofactor.

It is found in the cytoplasm. The catalysed reaction is Endonucleolytic cleavage at a junction such as a reciprocal single-stranded crossover between two homologous DNA duplexes (Holliday junction).. Functionally, the RuvA-RuvB-RuvC complex processes Holliday junction (HJ) DNA during genetic recombination and DNA repair. Endonuclease that resolves HJ intermediates. Cleaves cruciform DNA by making single-stranded nicks across the HJ at symmetrical positions within the homologous arms, yielding a 5'-phosphate and a 3'-hydroxyl group; requires a central core of homology in the junction. The consensus cleavage sequence is 5'-(A/T)TT(C/G)-3'. Cleavage occurs on the 3'-side of the TT dinucleotide at the point of strand exchange. HJ branch migration catalyzed by RuvA-RuvB allows RuvC to scan DNA until it finds its consensus sequence, where it cleaves and resolves the cruciform DNA. This chain is Crossover junction endodeoxyribonuclease RuvC, found in Rhodopseudomonas palustris (strain BisA53).